Consider the following 346-residue polypeptide: FAS-associated factor 2 (346 aa).

An N6-acetyllysine modification is found at K68. A coiled-coil region spans residues 176 to 251 (SERLEREERN…EEKERKLECL (76 aa)). Residues 200 to 262 (ASLRADQEKE…PEPSPDDPDS (63 aa)) form a disordered region. Basic and acidic residues predominate over residues 204–249 (ADQEKERKKREERERKRRKEEEVQQQKLAEERRRQNLQEEKERKLE). Positions 258-340 (DDPDSVKIIF…GLSHTEVLFV (83 aa)) constitute a UBX domain.

In terms of assembly, identified in a complex that contains SEL1L, OS9, FAF2/UBXD8, UBE2J1/UBC6E and AUP1. Interacts with YOD1. Interacts (via N-terminus) with UBQLN2 (via C-terminus). Interacts with PNPLA2 and UBAC2. Interacts with ZFAND2B; probably through VCP. Interacts with LMBR1L.

Its subcellular location is the cytoplasm. It localises to the lipid droplet. The protein localises to the endoplasmic reticulum. In terms of biological role, plays an important role in endoplasmic reticulum-associated degradation (ERAD) that mediates ubiquitin-dependent degradation of misfolded endoplasmic reticulum proteins. By controlling the steady-state expression of the IGF1R receptor, indirectly regulates the insulin-like growth factor receptor signaling pathway. Involved in inhibition of lipid droplet degradation by binding to phospholipase PNPL2 and inhibiting its activity by promoting dissociation of PNPL2 from its endogenous activator, ABHD5 which inhibits the rate of triacylglycerol hydrolysis. Involved in stress granule disassembly: associates with ubiquitinated G3BP1 in response to heat shock, thereby promoting interaction between ubiquitinated G3BP1 and VCP, followed by G3BP1 extraction from stress granules and stress granule disassembly. This chain is FAS-associated factor 2 (Faf2), found in Rattus norvegicus (Rat).